Reading from the N-terminus, the 40-residue chain is Muscarinic m1-toxin3 (40 aa).

Cys-3 and Cys-24 are oxidised to a cystine.

This sequence belongs to the three-finger toxin family. Short-chain subfamily. Aminergic toxin sub-subfamily. Monomer. Contains 4 disulfide bonds. In terms of tissue distribution, expressed by the venom gland.

It localises to the secreted. Functionally, binds irreversibly and specifically to M1 (CHRM1) muscarinic acetylcholine receptors, blocking further binding of antagonists and preventing the action of agonists. The protein is Muscarinic m1-toxin3 of Dendroaspis angusticeps (Eastern green mamba).